The sequence spans 216 residues: U1 small nuclear ribonucleoprotein C (216 aa).

The Matrin-type zinc finger occupies 4–36; the sequence is FFCDYCDVYLTHDSMSVRKAHNSGRNHLRNVVD. Disordered regions lie at residues 70–89 and 125–216; these read PQNQPGGVPPGLGFPPPGAG and PGGI…ADKR. Pro residues-rich tracts occupy residues 140 to 149 and 157 to 204; these read PPMPPFPGMP and GVPP…PPFG.

The protein belongs to the U1 small nuclear ribonucleoprotein C family. In terms of assembly, U1 snRNP is composed of the 7 core Sm proteins B/B', D1, D2, D3, E, F and G that assemble in a heptameric protein ring on the Sm site of the small nuclear RNA to form the core snRNP, and at least 3 U1 snRNP-specific proteins U1-70K, U1-A and U1-C. U1-C interacts with U1 snRNA and the 5' splice-site region of the pre-mRNA.

It is found in the nucleus. Functionally, component of the spliceosomal U1 snRNP, which is essential for recognition of the pre-mRNA 5' splice-site and the subsequent assembly of the spliceosome. U1-C is directly involved in initial 5' splice-site recognition for both constitutive and regulated alternative splicing. The interaction with the 5' splice-site seems to precede base-pairing between the pre-mRNA and the U1 snRNA. Stimulates commitment or early (E) complex formation by stabilizing the base pairing of the 5' end of the U1 snRNA and the 5' splice-site region. The polypeptide is U1 small nuclear ribonucleoprotein C (Neurospora crassa (strain ATCC 24698 / 74-OR23-1A / CBS 708.71 / DSM 1257 / FGSC 987)).